A 418-amino-acid chain; its full sequence is Maltoporin (418 aa).

An N-terminal signal peptide occupies residues 1 to 26 (MLPMNRNTLGLAVTIATVFVSSTVTA).

This sequence belongs to the porin LamB (TC 1.B.3) family. Homotrimer formed of three 18-stranded antiparallel beta-barrels, containing three independent channels.

Its subcellular location is the cell outer membrane. The catalysed reaction is beta-maltose(in) = beta-maltose(out). Involved in the transport of maltose and maltodextrins. This is Maltoporin from Photobacterium profundum (strain SS9).